A 326-amino-acid polypeptide reads, in one-letter code: Pyruvate dehydrogenase E1 component subunit alpha (326 aa).

As to quaternary structure, heterodimer of an alpha and a beta chain. The cofactor is thiamine diphosphate.

The enzyme catalyses N(6)-[(R)-lipoyl]-L-lysyl-[protein] + pyruvate + H(+) = N(6)-[(R)-S(8)-acetyldihydrolipoyl]-L-lysyl-[protein] + CO2. Its function is as follows. The pyruvate dehydrogenase complex catalyzes the overall conversion of pyruvate to acetyl-CoA and CO(2). It contains multiple copies of three enzymatic components: pyruvate dehydrogenase (E1), dihydrolipoamide acetyltransferase (E2) and lipoamide dehydrogenase (E3). The polypeptide is Pyruvate dehydrogenase E1 component subunit alpha (pdhA) (Rickettsia felis (strain ATCC VR-1525 / URRWXCal2) (Rickettsia azadi)).